The following is a 151-amino-acid chain: Large ribosomal subunit protein bL9 (151 aa).

The protein belongs to the bacterial ribosomal protein bL9 family.

Functionally, binds to the 23S rRNA. This is Large ribosomal subunit protein bL9 from Chlorobium luteolum (strain DSM 273 / BCRC 81028 / 2530) (Pelodictyon luteolum).